We begin with the raw amino-acid sequence, 521 residues long: Sodium/hydrogen exchanger 5 (521 aa).

Residues 1–23 (MEEVMISPVEHDPQGQVKQQQAA) are Cytoplasmic-facing. The helical transmembrane segment at 24–44 (GVGILLQIMMLVLSFVLGHVL) threads the bilayer. Topologically, residues 45 to 48 (RRHR) are lumenal. Residues 49-69 (FHYLPEASGSLLIGLIVGILA) form a helical membrane-spanning segment. Residues 70-86 (NISDTETSIRTWFNFHE) are Cytoplasmic-facing. An intramembrane region (helical) is located at residues 87–107 (EFFFLFLLPPIIFQSGFSLQP). The Cytoplasmic portion of the chain corresponds to 108 to 115 (KPFFSNFG). A helical membrane pass occupies residues 116–136 (AIVTFAIIGTFVASVVTGGLV). Topologically, residues 137 to 141 (YLGGS) are lumenal. 2 consecutive intramembrane regions (helical) follow at residues 142–162 (MYLM…LISA) and 166–186 (VTVL…ALVF). At 187-222 (GESVLNDAMAISLYRTMSLVNRQSSSGEHFFMVVIR) the chain is on the lumenal side. The chain crosses the membrane as a helical span at residues 223 to 243 (FFETFAGSMSAGVGVGFTSAL). At 244–271 (LFKYAGLDTENLQNLECCLFVLFPYFSY) the chain is on the cytoplasmic side. The chain crosses the membrane as a helical span at residues 272-292 (MLAEGVGLSGIVSILFTGIVM). Over 293-310 (KRYTFSNLSEASQSFVSS) the chain is Lumenal. A glycan (N-linked (GlcNAc...) asparagine) is linked at Asn299. Residues 311-331 (FFHLISSLAETFTFIYMGFDI) traverse the membrane as a helical segment. The Cytoplasmic portion of the chain corresponds to 332-340 (AMEQHSWSH). Residues 341 to 361 (VGFILFSILFIGVARAVNVFG) form a helical membrane-spanning segment. At 362-382 (CAYLVNLFRQENQKIPMKHQK) the chain is on the lumenal side. Residues 383–402 (ALWYSGLRGAMAFALALQSL) traverse the membrane as a helical segment. Over 403-411 (HDLPEGHGQ) the chain is Cytoplasmic. Residues 412 to 432 (IIFTATTTIVVVTVLLIGGST) traverse the membrane as a helical segment. At 433–521 (GKMLEALEVV…NSGDGDGDGE (89 aa)) the chain is on the lumenal side. Residues 453 to 480 (GFEESDHQYVPPPFSIGASSDEDTSSSG) form a disordered region. Low complexity predominate over residues 467–480 (SIGASSDEDTSSSG).

It belongs to the monovalent cation:proton antiporter 1 (CPA1) transporter (TC 2.A.36) family. In terms of tissue distribution, expressed in roots, leaves, stems, flowers and siliques. Detected at low levels in roots and shoots.

It localises to the endosome membrane. It is found in the golgi apparatus. The protein localises to the trans-Golgi network membrane. Its subcellular location is the golgi stack membrane. It catalyses the reaction Na(+)(in) + H(+)(out) = Na(+)(out) + H(+)(in). The catalysed reaction is K(+)(in) + H(+)(out) = K(+)(out) + H(+)(in). Its function is as follows. Involved in trafficking to the vacuole. Required for cell proliferation and cell expansion, but not for cell differentiation. Acts in low affinity electroneutral exchange of protons for cations such as Na(+) or K(+) across membranes. May also exchange Li(+) and Cs(+) with a lower affinity. In Arabidopsis thaliana (Mouse-ear cress), this protein is Sodium/hydrogen exchanger 5 (NHX5).